The chain runs to 431 residues: Reverse prenyltransferase criA (431 aa).

Positions 104, 193, 195, 262, 264, 347, 412, and 416 each coordinate dimethylallyl diphosphate.

Belongs to the tryptophan dimethylallyltransferase family. Monomer.

The catalysed reaction is cyclo(L-tryptophyl-L-alanyl) + dimethylallyl diphosphate = preechinulin + diphosphate. Its pathway is secondary metabolite biosynthesis. The protein operates within alkaloid biosynthesis. In terms of biological role, reverse prenyltransferase; part of the gene cluster that mediates the biosynthesis of echinulin family alkaloid. The pathway begins with the biosynthesis of the cyclic dipeptide cyclo-L-Trp-L-Ala (cyclo-TA) by the NRPS criC via condensation of L-alanine and L-tryptophan. The prenyltransferase criA then catalyzes the first prenylation step, a reverse prenylation reaction at C2, to yield preechinulin. Preechinulin is the substrate of the cytochrome P450 monooxygenase criE that catalyzes the formation of the double bond between C10 and C11 to produce neoechulin A. The unique prenyltransferase criF functions as a competitive enzyme with criE for preechinulin metabolization and uses preechinulin for effective regiospecific prenylations. Preechinulin is prenylated by criF at C5 or C7. C7-prenylation leads to accumulation of tardioxopiperazine B without further modification by criF. In contrast, the C5-prenylated tardioxopiperazine A can be prenylated again by criF, predominantly at C7 to form echinulin or less frequently at C4 to give variecolorin L. CriF also accepts neoechilunin A to produce varlecolorin G (prenylation at C5) or isoechinulin A (prenylation at C7). CriF further converts isoechinulin A into dehydroechinulin. Moreover, a yet unidentified enzyme can also convert neoechilunin A into neoechilunin B by introducing a double bond between positions C14 and C17 and thus provides a further substrate to criF for C5 and C7 prenylation. The polypeptide is Reverse prenyltransferase criA (Aspergillus cristatus (Chinese Fuzhuan brick tea-fermentation fungus)).